We begin with the raw amino-acid sequence, 641 residues long: Methylenetetrahydrofolate reductase 2 (641 aa).

Glutamate 20 serves as the catalytic Proton donor/acceptor. NAD(+) is bound by residues 20-25 and 52-53; these read EYFPPK and TW. Residues 52–53, histidine 81, 111–113, tyrosine 153, aspartate 172, and lysine 179 contribute to the FAD site; these read TW and RGD. Position 113 (aspartate 113) interacts with substrate. Glutamine 190 is a substrate binding site.

It belongs to the methylenetetrahydrofolate reductase family. Requires FAD as cofactor.

The enzyme catalyses (6S)-5-methyl-5,6,7,8-tetrahydrofolate + NADP(+) = (6R)-5,10-methylene-5,6,7,8-tetrahydrofolate + NADPH + H(+). Its pathway is one-carbon metabolism; tetrahydrofolate interconversion. Functionally, major methylenetetrahydrofolate reductase required to generate the methyl groups necessary for methionine synthetase to convert homocysteine to methionine. Performs 15 to 20 percent of the total methylenetetrahydrofolate reductase activity of the cells. In Schizosaccharomyces pombe (strain 972 / ATCC 24843) (Fission yeast), this protein is Methylenetetrahydrofolate reductase 2 (met11).